The primary structure comprises 464 residues: Growth hormone-releasing hormone receptor (464 aa).

The signal sequence occupies residues 1-22 (MDSLLWATWVLCLLNLWGVALG). Residues 23–130 (HLHLECDFIT…EEKSYFSTVK (108 aa)) are Extracellular-facing. 3 disulfide bridges follow: C41/C64, C55/C96, and C78/C112. The N-linked (GlcNAc...) asparagine glycan is linked to N50. The helical transmembrane segment at 131-151 (IIYTTGHSISIVALCVAIAIL) threads the bilayer. The Cytoplasmic portion of the chain corresponds to 152-167 (VALRRLHCPRNYIHTQ). Residues 168-188 (LFATFILKASAVFLKDAAVFQ) form a helical membrane-spanning segment. Residues 189–210 (GDSTDHCSMSTILCKVSVAVSH) are Extracellular-facing. Residues 211–231 (FATMTNFSWLLAEAVYLSCLL) form a helical membrane-spanning segment. Topologically, residues 232 to 240 (ASTSPRSKP) are cytoplasmic. Residues 241–261 (AFWWLVLAGWGLPVLCTGTWV) traverse the membrane as a helical segment. Residues 262–283 (GCKLAFEDTACWDLDDSSPYWW) are Extracellular-facing. Residues 284–304 (IIKGPIVLSVGVNFGLFLNII) traverse the membrane as a helical segment. Residues 305–372 (CILLRKLGPA…QLPWRLSKST (68 aa)) lie on the Cytoplasmic side of the membrane. The chain crosses the membrane as a helical span at residues 373 to 393 (LLLIPLFGIHYIIFNFLPDSA). The Extracellular portion of the chain corresponds to 394 to 398 (GLGIR). A helical membrane pass occupies residues 399 to 419 (LPLELGLGSFQGFVVAVLYCF). The Cytoplasmic segment spans residues 420-464 (LNQEVRTEISRKWYGHDPELLPARRTCTEWTTPPRSRVKVLTSEC).

It belongs to the G-protein coupled receptor 2 family. Pituitary gland.

It localises to the cell membrane. Receptor for GRF, coupled to G proteins which activate adenylyl cyclase. Stimulates somatotroph cell growth, growth hormone gene transcription and growth hormone secretion. The polypeptide is Growth hormone-releasing hormone receptor (Ghrhr) (Rattus norvegicus (Rat)).